Consider the following 458-residue polypeptide: 5-hydroxytryptamine receptor 2C (458 aa).

Residues 1-32 (MVNLRNAVHSFLVHLIGLLVWQSDISVSPVAA) form the signal peptide. The Extracellular portion of the chain corresponds to 33–55 (IVTDIFNTSDGGRFKFPDGVQNW). Asn-39 carries an N-linked (GlcNAc...) asparagine glycan. Residues 56–80 (PALSIVIIIIMTIGGNILVIMAVSM) form a helical membrane-spanning segment. Topologically, residues 81–86 (EKKLHN) are cytoplasmic. A helical membrane pass occupies residues 87-111 (ATNYFLMSLAIADMLVGLLVMPLSL). Residues 112–128 (LAILYDYVWPLPRYLCP) lie on the Extracellular side of the membrane. Cys-127 and Cys-207 are joined by a disulfide. A helical transmembrane segment spans residues 129–151 (VWISLDVLFSTASIMHLCAISLD). Position 139 (Thr-139) interacts with ergotamine. The short motif at 151 to 153 (DRY) is the DRY motif; important for ligand-induced conformation changes element. At 152–167 (RYVAIRNPIEHSRFNS) the chain is on the cytoplasmic side. A helical transmembrane segment spans residues 168-189 (RTKAIMKIAIVWAISIGVSVPI). The Extracellular portion of the chain corresponds to 190–213 (PVIGLRDEEKVFVNNTTCVLNDPN). An N-linked (GlcNAc...) asparagine glycan is attached at Asn-204. Residue Leu-209 coordinates ergotamine. The chain crosses the membrane as a helical span at residues 214-236 (FVLIGSFVAFFIPLTIMVITYCL). Residues 237-311 (TIYVLRRQAL…AINNERKASK (75 aa)) lie on the Cytoplasmic side of the membrane. A disordered region spans residues 274-301 (EENSANPNQDQNARRRKKKERRPRGTMQ). Over residues 287 to 297 (RRRKKKERRPR) the composition is skewed to basic residues. The helical transmembrane segment at 312–336 (VLGIVFFVFLIMWCPFFITNILSVL) threads the bilayer. Cys-337 and Cys-341 are oxidised to a cystine. The Extracellular portion of the chain corresponds to 337–347 (CEKSCNQKLME). Residues 348–370 (KLLNVFVWIGYVCSGINPLVYTL) traverse the membrane as a helical segment. The NPxxY motif; important for ligand-induced conformation changes and signaling signature appears at 364 to 368 (NPLVY). At 371 to 458 (FNKIYRRAFS…SVVSERISSV (88 aa)) the chain is on the cytoplasmic side. The PDZ-binding motif lies at 456–458 (SSV).

Belongs to the G-protein coupled receptor 1 family. As to quaternary structure, interacts with MPDZ. Interacts with ARRB2. Interacts with MPP3; this interaction stabilizes the receptor at the plasma membrane and prevents the desensitization of the HTR2C receptor-mediated calcium response. Post-translationally, N-glycosylated. In terms of tissue distribution, detected in brain.

The protein resides in the cell membrane. Inhibited by inverse agonist ritanserin. Functionally, G-protein coupled receptor for 5-hydroxytryptamine (serotonin). Also functions as a receptor for various drugs and psychoactive substances, including ergot alkaloid derivatives, 1-2,5,-dimethoxy-4-iodophenyl-2-aminopropane (DOI) and lysergic acid diethylamide (LSD). Ligand binding causes a conformation change that triggers signaling via guanine nucleotide-binding proteins (G proteins) and modulates the activity of downstream effectors. HTR2C is coupled to G(q)/G(11) G alpha proteins and activates phospholipase C-beta, releasing diacylglycerol (DAG) and inositol 1,4,5-trisphosphate (IP3) second messengers that modulate the activity of phosphatidylinositol 3-kinase and promote the release of Ca(2+) ions from intracellular stores, respectively. Beta-arrestin family members inhibit signaling via G proteins and mediate activation of alternative signaling pathways. Regulates neuronal activity via the activation of short transient receptor potential calcium channels in the brain, and thereby modulates the activation of pro-opiomelanocortin neurons and the release of CRH that then regulates the release of corticosterone. Plays a role in the regulation of appetite and eating behavior, responses to anxiogenic stimuli and stress. Plays a role in insulin sensitivity and glucose homeostasis. This Homo sapiens (Human) protein is 5-hydroxytryptamine receptor 2C.